The primary structure comprises 272 residues: Exosome complex component Rrp42 (272 aa).

This sequence belongs to the RNase PH family. Rrp42 subfamily. In terms of assembly, component of the archaeal exosome complex. Forms a hexameric ring-like arrangement composed of 3 Rrp41-Rrp42 heterodimers. The hexameric ring associates with a trimer of Rrp4 and/or Csl4 subunits.

Its subcellular location is the cytoplasm. Functionally, non-catalytic component of the exosome, which is a complex involved in RNA degradation. Contributes to the structuring of the Rrp41 active site. This chain is Exosome complex component Rrp42, found in Thermococcus kodakarensis (strain ATCC BAA-918 / JCM 12380 / KOD1) (Pyrococcus kodakaraensis (strain KOD1)).